A 221-amino-acid chain; its full sequence is Protein GrpE (221 aa).

Positions 1–83 are disordered; sequence MEQEQKATQE…AKNCRTRSED (83 aa). A compositionally biased stretch (basic and acidic residues) spans 23–32; sequence QEEKAEERGG. Positions 41–53 are enriched in low complexity; sequence ENLQQENTQAQQE.

This sequence belongs to the GrpE family. In terms of assembly, homodimer.

It localises to the cytoplasm. Its function is as follows. Participates actively in the response to hyperosmotic and heat shock by preventing the aggregation of stress-denatured proteins, in association with DnaK and GrpE. It is the nucleotide exchange factor for DnaK and may function as a thermosensor. Unfolded proteins bind initially to DnaJ; upon interaction with the DnaJ-bound protein, DnaK hydrolyzes its bound ATP, resulting in the formation of a stable complex. GrpE releases ADP from DnaK; ATP binding to DnaK triggers the release of the substrate protein, thus completing the reaction cycle. Several rounds of ATP-dependent interactions between DnaJ, DnaK and GrpE are required for fully efficient folding. The sequence is that of Protein GrpE from Geobacillus stearothermophilus (Bacillus stearothermophilus).